The following is a 342-amino-acid chain: Methylthioribose-1-phosphate isomerase (342 aa).

Residues 49-51 (RGA), arginine 86, and glutamine 187 each bind substrate. Catalysis depends on aspartate 228, which acts as the Proton donor. 238–239 (NK) is a substrate binding site.

Belongs to the eIF-2B alpha/beta/delta subunits family. MtnA subfamily.

The enzyme catalyses 5-(methylsulfanyl)-alpha-D-ribose 1-phosphate = 5-(methylsulfanyl)-D-ribulose 1-phosphate. It functions in the pathway amino-acid biosynthesis; L-methionine biosynthesis via salvage pathway; L-methionine from S-methyl-5-thio-alpha-D-ribose 1-phosphate: step 1/6. In terms of biological role, catalyzes the interconversion of methylthioribose-1-phosphate (MTR-1-P) into methylthioribulose-1-phosphate (MTRu-1-P). This is Methylthioribose-1-phosphate isomerase from Klebsiella pneumoniae (strain 342).